A 366-amino-acid chain; its full sequence is Outer membrane protein IIIA (366 aa).

The first 22 residues, 1 to 22 (MNIRMVLLASAAAFAASTPVLA), serve as a signal peptide directing secretion.

This sequence belongs to the alphaproteobacteria porin family. In terms of assembly, forms calcium-stabilized oligomers. Post-translationally, attached covalently to peptidoglycan.

It localises to the cell outer membrane. Functionally, may act as an outer membrane pore. In Rhizobium leguminosarum bv. viciae, this protein is Outer membrane protein IIIA (ropA).